Reading from the N-terminus, the 206-residue chain is MMQESVLAQLDVSRETSEKLSHFVALVEKWNKAVNLIGRSTVDSIWTRHVLDSAQLRTHLASQPRLWLDLGSGSGFPGIVVAIMAAYESPESRFVLVESDQRKATFLRTACRELKLSASVLAARIESLPPQKADVISARALAALPDLCALAAPHLAPNGICLFPKGVGHISEIAAARQSWNMEVETLPSLTDPDAVILKLKALAHV.

Residues glycine 71, phenylalanine 76, 125-126, and arginine 139 contribute to the S-adenosyl-L-methionine site; that span reads IE.

It belongs to the methyltransferase superfamily. RNA methyltransferase RsmG family.

It is found in the cytoplasm. It carries out the reaction guanosine(527) in 16S rRNA + S-adenosyl-L-methionine = N(7)-methylguanosine(527) in 16S rRNA + S-adenosyl-L-homocysteine. Its function is as follows. Specifically methylates the N7 position of guanine in position 527 of 16S rRNA. This is Ribosomal RNA small subunit methyltransferase G from Cereibacter sphaeroides (strain ATCC 17023 / DSM 158 / JCM 6121 / CCUG 31486 / LMG 2827 / NBRC 12203 / NCIMB 8253 / ATH 2.4.1.) (Rhodobacter sphaeroides).